Here is a 346-residue protein sequence, read N- to C-terminus: Aspartate-semialdehyde dehydrogenase (346 aa).

Residues 12–15 (SGAV) and 40–41 (RS) each bind NADP(+). Residue R101 participates in phosphate binding. Catalysis depends on C131, which acts as the Acyl-thioester intermediate. Position 158 (Q158) interacts with substrate. 161–162 (SG) lines the NADP(+) pocket. Residue K225 participates in phosphate binding. A substrate-binding site is contributed by R246. H253 acts as the Proton acceptor in catalysis. Residue Q326 participates in NADP(+) binding.

The protein belongs to the aspartate-semialdehyde dehydrogenase family. In terms of assembly, homodimer.

The enzyme catalyses L-aspartate 4-semialdehyde + phosphate + NADP(+) = 4-phospho-L-aspartate + NADPH + H(+). It functions in the pathway amino-acid biosynthesis; L-lysine biosynthesis via DAP pathway; (S)-tetrahydrodipicolinate from L-aspartate: step 2/4. The protein operates within amino-acid biosynthesis; L-methionine biosynthesis via de novo pathway; L-homoserine from L-aspartate: step 2/3. It participates in amino-acid biosynthesis; L-threonine biosynthesis; L-threonine from L-aspartate: step 2/5. Its function is as follows. Catalyzes the NADPH-dependent formation of L-aspartate-semialdehyde (L-ASA) by the reductive dephosphorylation of L-aspartyl-4-phosphate. The sequence is that of Aspartate-semialdehyde dehydrogenase from Helicobacter pylori (strain ATCC 700392 / 26695) (Campylobacter pylori).